A 150-amino-acid polypeptide reads, in one-letter code: Large ribosomal subunit protein bL9 (150 aa).

It belongs to the bacterial ribosomal protein bL9 family.

Binds to the 23S rRNA. The protein is Large ribosomal subunit protein bL9 of Neisseria meningitidis serogroup C / serotype 2a (strain ATCC 700532 / DSM 15464 / FAM18).